Consider the following 152-residue polypeptide: Large ribosomal subunit protein uL13 (152 aa).

Belongs to the universal ribosomal protein uL13 family. In terms of assembly, part of the 50S ribosomal subunit.

Functionally, this protein is one of the early assembly proteins of the 50S ribosomal subunit, although it is not seen to bind rRNA by itself. It is important during the early stages of 50S assembly. The sequence is that of Large ribosomal subunit protein uL13 from Borreliella afzelii (strain PKo) (Borrelia afzelii).